Reading from the N-terminus, the 95-residue chain is MNLKPLADRVIVKPAPAEEKTKGGLYIPDTGKEKPMYGEVVAVGAGKMSDSGQLLEMPVKAGDKVLYGKYSGTEVSVEGEDYLIMRESDIFAILG.

The protein belongs to the GroES chaperonin family. Heptamer of 7 subunits arranged in a ring. Interacts with the chaperonin GroEL.

Its subcellular location is the cytoplasm. Its function is as follows. Together with the chaperonin GroEL, plays an essential role in assisting protein folding. The GroEL-GroES system forms a nano-cage that allows encapsulation of the non-native substrate proteins and provides a physical environment optimized to promote and accelerate protein folding. GroES binds to the apical surface of the GroEL ring, thereby capping the opening of the GroEL channel. In Chlorobium phaeovibrioides (strain DSM 265 / 1930) (Prosthecochloris vibrioformis (strain DSM 265)), this protein is Co-chaperonin GroES.